A 209-amino-acid polypeptide reads, in one-letter code: Thiamine-phosphate synthase (209 aa).

4-amino-2-methyl-5-(diphosphooxymethyl)pyrimidine contacts are provided by residues 36 to 40 (QLRDK) and asparagine 68. Mg(2+) contacts are provided by aspartate 69 and aspartate 88. 4-amino-2-methyl-5-(diphosphooxymethyl)pyrimidine is bound at residue serine 107. 133–135 (TNS) is a 2-[(2R,5Z)-2-carboxy-4-methylthiazol-5(2H)-ylidene]ethyl phosphate binding site. Residue lysine 136 coordinates 4-amino-2-methyl-5-(diphosphooxymethyl)pyrimidine. Residues glycine 164 and 184–185 (IT) each bind 2-[(2R,5Z)-2-carboxy-4-methylthiazol-5(2H)-ylidene]ethyl phosphate.

It belongs to the thiamine-phosphate synthase family. It depends on Mg(2+) as a cofactor.

The enzyme catalyses 2-[(2R,5Z)-2-carboxy-4-methylthiazol-5(2H)-ylidene]ethyl phosphate + 4-amino-2-methyl-5-(diphosphooxymethyl)pyrimidine + 2 H(+) = thiamine phosphate + CO2 + diphosphate. It catalyses the reaction 2-(2-carboxy-4-methylthiazol-5-yl)ethyl phosphate + 4-amino-2-methyl-5-(diphosphooxymethyl)pyrimidine + 2 H(+) = thiamine phosphate + CO2 + diphosphate. It carries out the reaction 4-methyl-5-(2-phosphooxyethyl)-thiazole + 4-amino-2-methyl-5-(diphosphooxymethyl)pyrimidine + H(+) = thiamine phosphate + diphosphate. It participates in cofactor biosynthesis; thiamine diphosphate biosynthesis; thiamine phosphate from 4-amino-2-methyl-5-diphosphomethylpyrimidine and 4-methyl-5-(2-phosphoethyl)-thiazole: step 1/1. Condenses 4-methyl-5-(beta-hydroxyethyl)thiazole monophosphate (THZ-P) and 2-methyl-4-amino-5-hydroxymethyl pyrimidine pyrophosphate (HMP-PP) to form thiamine monophosphate (TMP). The protein is Thiamine-phosphate synthase of Shouchella clausii (strain KSM-K16) (Alkalihalobacillus clausii).